We begin with the raw amino-acid sequence, 565 residues long: Arginine--tRNA ligase (565 aa).

A 'HIGH' region motif is present at residues 128–138 (ANPTGPLHVGH).

This sequence belongs to the class-I aminoacyl-tRNA synthetase family. Monomer.

The protein localises to the cytoplasm. It carries out the reaction tRNA(Arg) + L-arginine + ATP = L-arginyl-tRNA(Arg) + AMP + diphosphate. This Albidiferax ferrireducens (strain ATCC BAA-621 / DSM 15236 / T118) (Rhodoferax ferrireducens) protein is Arginine--tRNA ligase.